The following is a 303-amino-acid chain: ATP-dependent Clp protease ATP-binding subunit CLPT3, chloroplastic (303 aa).

The transit peptide at 1–37 (MLLANAPHNGCSRLQQVTLLRASGAKLHRKRALTVVA) directs the protein to the chloroplast. 2 disordered regions span residues 185–214 (ASTE…RDSD) and 278–303 (RDDN…DEYE).

This sequence belongs to the ClpA/ClpB family.

It is found in the plastid. The protein resides in the chloroplast. In terms of biological role, accessory protein regulating the assembly of the plastid Clp protease system. This Chlamydomonas reinhardtii (Chlamydomonas smithii) protein is ATP-dependent Clp protease ATP-binding subunit CLPT3, chloroplastic.